The primary structure comprises 479 residues: Nucleoside-diphosphatase uda-1 (479 aa).

Over 1–7 (MLFPAFS) the chain is Cytoplasmic. A helical; Signal-anchor for type II membrane protein transmembrane segment spans residues 8 to 24 (ILLISFFSLLSVVTTKT). At 25–479 (QYWCHGDGVL…VLSYFNIISV (455 aa)) the chain is on the lumenal side. Glu171 functions as the Proton acceptor in the catalytic mechanism. 2 N-linked (GlcNAc...) asparagine glycosylation sites follow: Asn300 and Asn452.

The protein belongs to the GDA1/CD39 NTPase family. Requires Ca(2+) as cofactor. The cofactor is Mg(2+). Mn(2+) is required as a cofactor.

The protein localises to the endomembrane system. It carries out the reaction a ribonucleoside 5'-diphosphate + H2O = a ribonucleoside 5'-phosphate + phosphate + H(+). In terms of biological role, hydrolyzes UDP and GDP but not any other nucleoside di-, mono- or triphosphates. May promote reglycosylation reactions involved in glycoproteins folding and quality control in the endoplasmic reticulum. This is Nucleoside-diphosphatase uda-1 (uda-1) from Caenorhabditis elegans.